The sequence spans 282 residues: Bifunctional protein FolD (282 aa).

Residues 165-167 and Ser190 contribute to the NADP(+) site; that span reads GRS.

The protein belongs to the tetrahydrofolate dehydrogenase/cyclohydrolase family. In terms of assembly, homodimer.

The enzyme catalyses (6R)-5,10-methylene-5,6,7,8-tetrahydrofolate + NADP(+) = (6R)-5,10-methenyltetrahydrofolate + NADPH. It carries out the reaction (6R)-5,10-methenyltetrahydrofolate + H2O = (6R)-10-formyltetrahydrofolate + H(+). It functions in the pathway one-carbon metabolism; tetrahydrofolate interconversion. Functionally, catalyzes the oxidation of 5,10-methylenetetrahydrofolate to 5,10-methenyltetrahydrofolate and then the hydrolysis of 5,10-methenyltetrahydrofolate to 10-formyltetrahydrofolate. The sequence is that of Bifunctional protein FolD from Acinetobacter baumannii (strain ATCC 17978 / DSM 105126 / CIP 53.77 / LMG 1025 / NCDC KC755 / 5377).